The primary structure comprises 132 residues: Fatty acid-binding protein, brain (132 aa).

Residue V2 is modified to N-acetylvaline. Position 127–129 (127–129 (RCY)) interacts with a fatty acid.

This sequence belongs to the calycin superfamily. Fatty-acid binding protein (FABP) family. As to expression, expressed in brain and other neural tissues.

Its subcellular location is the cytoplasm. Functionally, B-FABP could be involved in the transport of a so far unknown hydrophobic ligand with potential morphogenic activity during CNS development. It is required for the establishment of the radial glial fiber system in developing brain, a system that is necessary for the migration of immature neurons to establish cortical layers. The chain is Fatty acid-binding protein, brain (Fabp7) from Mus musculus (Mouse).